Here is a 533-residue protein sequence, read N- to C-terminus: Beta-1,4 N-acetylgalactosaminyltransferase 1 (533 aa).

Topologically, residues 1–7 (MRLDRRA) are cytoplasmic. The chain crosses the membrane as a helical; Signal-anchor for type II membrane protein span at residues 8 to 25 (LYALVLLLACASLGLLYS). At 26–533 (STRNAPSLPN…KHRLQCMTAE (508 aa)) the chain is on the lumenal side. Asparagine 79, asparagine 179, and asparagine 274 each carry an N-linked (GlcNAc...) asparagine glycan. Cysteine 429 and cysteine 476 form a disulfide bridge.

The protein belongs to the glycosyltransferase 2 family. As to quaternary structure, homodimer; disulfide-linked. Most abundant in brain, liver, lung, spleen and testis.

The protein resides in the golgi apparatus membrane. The catalysed reaction is a ganglioside GM3 (d18:1(4E)) + UDP-N-acetyl-alpha-D-galactosamine = a ganglioside GM2 (d18:1(4E)) + UDP + H(+). It carries out the reaction a ganglioside GD3 (d18:1(4E)) + UDP-N-acetyl-alpha-D-galactosamine = a ganglioside GD2 (d18:1(4E)) + UDP + H(+). It catalyses the reaction a ganglioside GM3 + UDP-N-acetyl-alpha-D-galactosamine = a ganglioside GM2 + UDP + H(+). The enzyme catalyses a ganglioside GD3 + UDP-N-acetyl-alpha-D-galactosamine = a ganglioside GD2 + UDP + H(+). The catalysed reaction is a ganglioside GD1a + UDP-N-acetyl-alpha-D-galactosamine = a ganglioside GalNAc-GD1a + UDP + H(+). It carries out the reaction a ganglioside GT3 (d18:1(4E)) + UDP-N-acetyl-alpha-D-galactosamine = a ganglioside GT2 (d18:1(4E)) + UDP + H(+). It catalyses the reaction a beta-D-Gal-(1-&gt;4)-beta-D-Glc-(1&lt;-&gt;1)-Cer(d18:1(4E)) + UDP-N-acetyl-alpha-D-galactosamine = a ganglioside GA2 (d18:1(4E)) + UDP + H(+). The enzyme catalyses a neolactoside IV(3)-alpha-NeuGc-nLc4Cer + UDP-N-acetyl-alpha-D-galactosamine = a neolactoside IV(4)-beta-GalNAc-IV(3)-alpha-NeuGc-nLc4Cer + UDP + H(+). The protein operates within sphingolipid metabolism. Functionally, involved in the biosynthesis of gangliosides GM2, GD2 and GA2. In terms of biological role, involved in the biosynthesis of gangliosides GM2, GD2, GT2 and GA2 from GM3, GD3, GT3 and GA3, respectively. This chain is Beta-1,4 N-acetylgalactosaminyltransferase 1, found in Mus musculus (Mouse).